The following is a 29-amino-acid chain: Galanin (29 aa).

Ala29 carries the post-translational modification Alanine amide.

Belongs to the galanin family.

The protein localises to the secreted. Functionally, contracts smooth muscle of the gastrointestinal and genitourinary tract, regulates growth hormone release, modulates insulin release, and may be involved in the control of adrenal secretion. This chain is Galanin (gal), found in Pelophylax ridibundus (Marsh frog).